The chain runs to 203 residues: High frequency lysogenization protein HflD homolog (203 aa).

It belongs to the HflD family.

It localises to the cytoplasm. The protein localises to the cell inner membrane. This is High frequency lysogenization protein HflD homolog from Vesicomyosocius okutanii subsp. Calyptogena okutanii (strain HA).